A 52-amino-acid chain; its full sequence is DNA import protein CedA2 (52 aa).

A run of 2 helical transmembrane segments spans residues Met1 to Tyr21 and Ile27 to Glu47.

As to quaternary structure, forms a complex composed of CedA, CedA1 and CedA2.

It localises to the cell membrane. Part of the Ced system, which is involved in DNA import. This chain is DNA import protein CedA2, found in Sulfolobus acidocaldarius (strain ATCC 33909 / DSM 639 / JCM 8929 / NBRC 15157 / NCIMB 11770).